Consider the following 621-residue polypeptide: F-box/LRR-repeat protein 4 (621 aa).

Asymmetric dimethylarginine is present on Arg-28. The region spanning 277-332 is the F-box domain; sequence NGYFDKLPYELIQLILNHLSLPDLCRLAQTCRLLHQHCCDPLQYIHLNLQPYWARL. LRR repeat units lie at residues 376–397, 402–421, 427–448, 452–474, 480–501, 504–524, 532–558, 559–583, and 584–609; these read ELVR…EVIS, NLQD…AFGH, SLKR…SILN, ELQH…ASMI, NLRT…AELA, CVLL…STGC, LPNL…ASNC, TRLQ…LLES, and CKDL…LNAS.

Part of a SCF (SKP1-CUL1-F-box) protein ligase complex. Interacts with FAF2 and VCP. Interacts with PPTC7; this interaction promotes destruction of BNIP3 and NIX and mitophagy suppression.

Its subcellular location is the cytoplasm. It localises to the nucleus. It is found in the mitochondrion outer membrane. Substrate-recognition component of the mitochondria-localized SCF-FBXL4 ubiquitin E3 ligase complex that plays a role in the restriction of mitophagy by controlling the degradation of BNIP3 and NIX mitophagy receptors. Also rescues mitochondrial injury through reverting hyperactivation of DRP1-mediated mitochondrial fission. This is F-box/LRR-repeat protein 4 (Fbxl4) from Mus musculus (Mouse).